Consider the following 416-residue polypeptide: Cysteate synthase (416 aa).

The residue at position 104 (lysine 104) is an N6-(pyridoxal phosphate)lysine. A pyridoxal 5'-phosphate-binding site is contributed by asparagine 130.

Belongs to the threonine synthase family. Cysteate synthase subfamily. As to quaternary structure, homotrimer. Requires pyridoxal 5'-phosphate as cofactor.

The enzyme catalyses O-phospho-L-serine + sulfite + H(+) = L-cysteate + phosphate. It functions in the pathway cofactor biosynthesis; coenzyme M biosynthesis. Specifically catalyzes the beta-elimination of phosphate from L-phosphoserine and the beta-addition of sulfite to the dehydroalanine intermediate to produce L-cysteate. This Methanosarcina mazei (strain ATCC BAA-159 / DSM 3647 / Goe1 / Go1 / JCM 11833 / OCM 88) (Methanosarcina frisia) protein is Cysteate synthase.